A 933-amino-acid chain; its full sequence is Myocardin (933 aa).

The MEF2C-binding signature appears at I12–R27. 3 RPEL repeats span residues S18–R43, D62–S87, and D106–C131. Residues F153 to N205 are HDAC5-binding. 2 disordered regions span residues E154–M282 and N324–P365. A compositionally biased stretch (polar residues) spans S210 to L220. The segment covering N248–Y265 has biased composition (basic residues). Residues N330–A346 are compositionally biased toward low complexity. Residues K347 to S357 show a composition bias toward polar residues. The SAP domain occupies L368–Q402. Phosphoserine; by GSK3-beta is present on residues S445, S449, S453, and S457. Positions L515–T550 form a coiled coil. Residues D568–S613 are disordered. S621, S625, S629, and S633 each carry phosphoserine; by GSK3-beta. Disordered regions lie at residues P630–P672 and P760–Y794. Residues I712–W933 are required for interaction with and ubiquitination by STUB1. A phosphoserine; by MAPK1 and MAPK3 mark is found at S810, S857, and S864. T891 is modified (phosphothreonine; by MAPK1 and MAPK3).

As to quaternary structure, homodimer. Interacts with MLLT7/FOXO4. Interacts with SRF, its association does not depend on specific DNA sequences for ternary complex formation. Interacts (via C-terminal) with EP300 (via the CREB-binding domain). Interacts with HDAC4 and HDAC5. Interacts with MEF2C. Interacts (via C-terminus) with STUB1/CHIP. Interacts with PURB. Post-translationally, ubiquitinated; by STUB1/CHIP at the C-terminus, leading to its degradation by the proteasome. Phosphorylation by GSK3B is required for STUB1/CHIP-mediated ubiquitination. In terms of processing, phosphorylation negatively regulates the intrinsic myocardin transcriptional activity. Phosphorylated; by GSK3B. In terms of tissue distribution, expressed in the heart and in smooth muscle cells-containing tissues (aorta, pulmonary vein, lung), but is not detectable in skeletal muscle, liver, kidney and spleen.

Its subcellular location is the nucleus. Its function is as follows. Smooth muscle cells (SM) and cardiac muscle cells-specific transcriptional factor which uses the canonical single or multiple CArG boxes DNA sequence. Acts as a cofactor of serum response factor (SRF) with the potential to modulate SRF-target genes. Plays a crucial role in cardiogenesis, urinary bladder development, and differentiation of the smooth muscle cell lineage (myogenesis). Positively regulates the transcription of genes involved in vascular smooth muscle contraction. The protein is Myocardin (MYOCD) of Sus scrofa (Pig).